Consider the following 201-residue polypeptide: Recombination protein RecR (201 aa).

A C4-type zinc finger spans residues 57-72 (CADCRTFTEQEHCTIC). In terms of domain architecture, Toprim spans 81–176 (GQICVVESPA…LASRIAHGVP (96 aa)).

Belongs to the RecR family.

Its function is as follows. May play a role in DNA repair. It seems to be involved in an RecBC-independent recombinational process of DNA repair. It may act with RecF and RecO. The chain is Recombination protein RecR from Yersinia enterocolitica serotype O:8 / biotype 1B (strain NCTC 13174 / 8081).